Here is a 70-residue protein sequence, read N- to C-terminus: Large ribosomal subunit protein eL38 (70 aa).

The protein belongs to the eukaryotic ribosomal protein eL38 family.

This is Large ribosomal subunit protein eL38 (RpL38) from Bombyx mori (Silk moth).